The primary structure comprises 435 residues: Methylenetetrahydrofolate--tRNA-(uracil-5-)-methyltransferase TrmFO (435 aa).

9 to 14 lines the FAD pocket; sequence GAGLAG.

It belongs to the MnmG family. TrmFO subfamily. It depends on FAD as a cofactor.

It is found in the cytoplasm. It carries out the reaction uridine(54) in tRNA + (6R)-5,10-methylene-5,6,7,8-tetrahydrofolate + NADH + H(+) = 5-methyluridine(54) in tRNA + (6S)-5,6,7,8-tetrahydrofolate + NAD(+). The catalysed reaction is uridine(54) in tRNA + (6R)-5,10-methylene-5,6,7,8-tetrahydrofolate + NADPH + H(+) = 5-methyluridine(54) in tRNA + (6S)-5,6,7,8-tetrahydrofolate + NADP(+). Functionally, catalyzes the folate-dependent formation of 5-methyl-uridine at position 54 (M-5-U54) in all tRNAs. The protein is Methylenetetrahydrofolate--tRNA-(uracil-5-)-methyltransferase TrmFO of Staphylococcus epidermidis (strain ATCC 35984 / DSM 28319 / BCRC 17069 / CCUG 31568 / BM 3577 / RP62A).